A 620-amino-acid polypeptide reads, in one-letter code: Acetylcholinesterase 1 (620 aa).

The signal sequence occupies residues 1–31 (MRYSLLFFIFLPCVITAVDLIHLHDGSPLFG). Asparagine 74 is a glycosylation site (N-linked (GlcNAc...) asparagine). Residues cysteine 82 and cysteine 109 are joined by a disulfide bond. Serine 216 acts as the Acyl-ester intermediate in catalysis. A disulfide bridge links cysteine 270 with cysteine 286. N-linked (GlcNAc...) asparagine glycosylation is present at asparagine 272. Residues glutamate 346 and histidine 468 each act as charge relay system in the active site. A disulfide bridge connects residues cysteine 430 and cysteine 558. N-linked (GlcNAc...) asparagine glycosylation is found at asparagine 486 and asparagine 536.

This sequence belongs to the type-B carboxylesterase/lipase family. Oligomer composed of disulfide-linked homodimers.

The protein resides in the synapse. It localises to the secreted. Its subcellular location is the cell membrane. It catalyses the reaction acetylcholine + H2O = choline + acetate + H(+). In terms of biological role, rapidly hydrolyzes choline released into the synapse. This is Acetylcholinesterase 1 (ace-1) from Caenorhabditis briggsae.